We begin with the raw amino-acid sequence, 211 residues long: Adenylate kinase (211 aa).

Residue 10 to 15 (GSGKGT) coordinates ATP. The tract at residues 30 to 59 (STGDLFRENILNSTTLGKEIKKIVEKGELV) is NMP. AMP-binding positions include Thr-31, Arg-36, 57-59 (ELV), 85-88 (GFPR), and Gln-92. The segment at 121–158 (GRRICKSCNNIFNIYTLATKKNGICDVCKGDLYQREDD) is LID. Arg-122 is a binding site for ATP. The Zn(2+) site is built by Cys-125 and Cys-128. 131–132 (IF) provides a ligand contact to ATP. Zn(2+)-binding residues include Cys-145 and Cys-148. Positions 155 and 166 each coordinate AMP. Residue Val-194 coordinates ATP.

This sequence belongs to the adenylate kinase family. Monomer.

It localises to the cytoplasm. It catalyses the reaction AMP + ATP = 2 ADP. Its pathway is purine metabolism; AMP biosynthesis via salvage pathway; AMP from ADP: step 1/1. Its function is as follows. Catalyzes the reversible transfer of the terminal phosphate group between ATP and AMP. Plays an important role in cellular energy homeostasis and in adenine nucleotide metabolism. This is Adenylate kinase from Borrelia garinii subsp. bavariensis (strain ATCC BAA-2496 / DSM 23469 / PBi) (Borreliella bavariensis).